The chain runs to 276 residues: Vitamin B12-binding protein (276 aa).

The signal sequence occupies residues 1-20 (MIVRFLCWLTGLLLCTAAYA). Positions 24–273 (RVISLAPHAT…QLTALSPGSS (250 aa)) constitute a Fe/B12 periplasmic-binding domain. Cysteine 186 and cysteine 262 are oxidised to a cystine.

This sequence belongs to the BtuF family. In terms of assembly, the complex is composed of two ATP-binding proteins (BtuD), two transmembrane proteins (BtuC) and a solute-binding protein (BtuF).

The protein resides in the periplasm. Part of the ABC transporter complex BtuCDF involved in vitamin B12 import. Binds vitamin B12 and delivers it to the periplasmic surface of BtuC. The protein is Vitamin B12-binding protein of Pectobacterium carotovorum subsp. carotovorum (strain PC1).